The chain runs to 142 residues: MVLSAADKNNVKTTWDKIGGHAAEYVAEGLTRMFTSFPTTKTYFHHIDVSPGSGDIKAHGKKVADALTTAVGHLDDLPTALSTLSDVHAHKLRVDPVNFKFLNHCLLVTLAAHLGADFTPSIHASLDKFFASVSTVLTSKYR.

The Globin domain maps to 2–142; that stretch reads VLSAADKNNV…VSTVLTSKYR (141 aa). At serine 4 the chain carries Phosphoserine. An N6-succinyllysine mark is found at lysine 8 and lysine 12. Lysine 17 carries the post-translational modification N6-acetyllysine; alternate. N6-succinyllysine; alternate is present on lysine 17. Tyrosine 25 carries the post-translational modification Phosphotyrosine. Position 36 is a phosphoserine (serine 36). Lysine 41 is modified (N6-succinyllysine). Residue serine 50 is modified to Phosphoserine. Residue histidine 59 coordinates O2. Histidine 88 serves as a coordination point for heme b. Threonine 109 is subject to Phosphothreonine. 2 positions are modified to phosphoserine: serine 125 and serine 132. Threonine 135 and threonine 138 each carry phosphothreonine. Serine 139 carries the phosphoserine modification.

This sequence belongs to the globin family. As to quaternary structure, heterotetramer of two alpha chains and two beta chains. In terms of tissue distribution, red blood cells.

Involved in oxygen transport from the lung to the various peripheral tissues. Its function is as follows. Hemopressin acts as an antagonist peptide of the cannabinoid receptor CNR1. Hemopressin-binding efficiently blocks cannabinoid receptor CNR1 and subsequent signaling. This is Hemoglobin subunit alpha (HBA) from Cavia porcellus (Guinea pig).